Reading from the N-terminus, the 460-residue chain is tRNA(Ile)-lysidine synthase (460 aa).

30–35 (SGGLDS) contacts ATP.

This sequence belongs to the tRNA(Ile)-lysidine synthase family.

Its subcellular location is the cytoplasm. The enzyme catalyses cytidine(34) in tRNA(Ile2) + L-lysine + ATP = lysidine(34) in tRNA(Ile2) + AMP + diphosphate + H(+). In terms of biological role, ligates lysine onto the cytidine present at position 34 of the AUA codon-specific tRNA(Ile) that contains the anticodon CAU, in an ATP-dependent manner. Cytidine is converted to lysidine, thus changing the amino acid specificity of the tRNA from methionine to isoleucine. The chain is tRNA(Ile)-lysidine synthase from Yersinia pestis.